The chain runs to 140 residues: Large-conductance mechanosensitive channel (140 aa).

2 helical membrane-spanning segments follow: residues 11–31 (FAMR…GAFG) and 82–102 (GNFI…FLLV).

It belongs to the MscL family. Homopentamer.

Its subcellular location is the cell inner membrane. Functionally, channel that opens in response to stretch forces in the membrane lipid bilayer. May participate in the regulation of osmotic pressure changes within the cell. The sequence is that of Large-conductance mechanosensitive channel from Parabacteroides distasonis (strain ATCC 8503 / DSM 20701 / CIP 104284 / JCM 5825 / NCTC 11152).